The chain runs to 861 residues: Piwi-like protein 1 (861 aa).

The span at 1 to 13 shows a compositional bias: basic residues; sequence MTGRARARARGRA. Positions 1-64 are disordered; it reads MTGRARARAR…TAGGTAKSQG (64 aa). R14 carries the post-translational modification Omega-N-methylarginine; by PRMT5; alternate. Residue R14 is modified to Symmetric dimethylarginine; by PRMT5; alternate. Residues 17–27 are compositionally biased toward polar residues; the sequence is ETAQLVGSTAS. Position 49 is an omega-N-methylarginine; by PRMT5 (R49). R53 carries the omega-N-methylarginine; alternate modification. The residue at position 53 (R53) is a Symmetric dimethylarginine; alternate. Residues 217-224 carry the D-box motif; sequence RRLLKIMN. Residues 278–391 form the PAZ domain; that stretch reads TVLDFMFNFY…LIPELCYLTG (114 aa). The required for binding 2'-O-methylated 3'-end of piRNAs stretch occupies residues 316 to 318; it reads TYR. R370 carries the omega-N-methylarginine; by PRMT5 modification. An MID region region spans residues 479–615; it reads SKETRGAPLI…LQMNCKMGGE (137 aa). In terms of domain architecture, Piwi spans 555–847; the sequence is IVVCLLSSNR…LAFLVGQSIH (293 aa). Residues D632, E670, D702, and H836 contribute to the active site.

It belongs to the argonaute family. Piwi subfamily. Interacts (via Piwi domain) with DICER1, suggesting that it forms ribonucleoprotein RISC complexes; this interaction is regulated by HSP90AB1 activity. Interacts with MAEL, KIF17, PABPC1, PRMT5 and WDR77. Interacts (when methylated on arginine residues) with TDRD1, TDRKH/TDRD2, RNF17/TDRD4, TDRD6, TDRD7 and TDRD9. Interacts with CLOCK. Interacts with MOV10L1. Interacts with ANAPC10; interaction oly takes place following piRNA-binding. Interacts with RNF8; leading to sequester RNF8 in the cytoplasm. Interacts with TEX19. Requires Mg(2+) as cofactor. In terms of processing, arginine methylation by PRMT5 is required for the interaction with Tudor domain-containing protein (TDRD1, TDRKH/TDRD2, RNF17/TDRD4, TDRD6, TDRD7 and TDRD9) and subsequent localization to the meiotic nuage, also named P granule. Post-translationally, ubiquitinated by the anaphase promoting complex/cyclosome (APC/C) in late spermatids, leading to its degradation. Ubiquitination only takes place following piRNA-binding in adult testis. Ubiquitination and degradation in late spermatogenesis by APC/C is probably required to release RNF8 from the cytoplasm and promote histone to protamine exchange by RNF8. As to expression, expressed in spermatocytes and spermatids. Also detected in prostate cancer (at protein level). Detected in most fetal and adult tissues. Expressed in testes, specifically in germline cells; detected in spermatocytes and spermatids during spermatogenesis. Increased expression in testicular tumors originating from embryonic germ cells with retention of germ cells phenotype. No expression in testicular tumors of somatic origin, such as Sertoli cell and Leydig cell tumors. Overexpressed in gastric cancer cells. Isoform 3: Ubiquitously expressed, and specifically in CD34(+) hematopoietic progenitor cells but not in more differentiated cells.

It is found in the cytoplasm. Its function is as follows. Endoribonuclease that plays a central role in postnatal germ cells by repressing transposable elements and preventing their mobilization, which is essential for the germline integrity. Acts via the piRNA metabolic process, which mediates the repression of transposable elements during meiosis by forming complexes composed of piRNAs and Piwi proteins and governs the methylation and subsequent repression of transposons. Directly binds methylated piRNAs, a class of 24 to 30 nucleotide RNAs that are generated by a Dicer-independent mechanism and are primarily derived from transposons and other repeated sequence elements. Strongly prefers a uridine in the first position of their guide (g1U preference, also named 1U-bias). Not involved in the piRNA amplification loop, also named ping-pong amplification cycle. Acts as an endoribonuclease that cleaves transposon messenger RNAs. Besides their function in transposable elements repression, piRNAs are probably involved in other processes during meiosis such as translation regulation. Probable component of some RISC complex, which mediates RNA cleavage and translational silencing. Also plays a role in the formation of chromatoid bodies and is required for some miRNAs stability. Required to sequester RNF8 in the cytoplasm until late spermatogenesis; RNF8 being released upon ubiquitination and degradation of PIWIL1. Functionally, may be a negative developmental regulator. This chain is Piwi-like protein 1 (PIWIL1), found in Homo sapiens (Human).